We begin with the raw amino-acid sequence, 173 residues long: Probable DNA-directed RNA polymerase subunit delta (173 aa).

In terms of domain architecture, HTH HARE-type spans 14–81; that stretch reads LSMIELGVKI…GSGMWGLKRW (68 aa). Positions 86 to 173 are disordered; sequence QAEEEITEEP…EDENDDDNTR (88 aa). The span at 109-173 shows a compositional bias: acidic residues; sequence IDDVDDDLDV…EDENDDDNTR (65 aa).

It belongs to the RpoE family. As to quaternary structure, RNAP is composed of a core of 2 alpha, a beta and a beta' subunits. The core is associated with a delta subunit and one of several sigma factors.

In terms of biological role, participates in both the initiation and recycling phases of transcription. In the presence of the delta subunit, RNAP displays an increased specificity of transcription, a decreased affinity for nucleic acids, and an increased efficiency of RNA synthesis because of enhanced recycling. The sequence is that of Probable DNA-directed RNA polymerase subunit delta from Oceanobacillus iheyensis (strain DSM 14371 / CIP 107618 / JCM 11309 / KCTC 3954 / HTE831).